Reading from the N-terminus, the 335-residue chain is Anthranilate phosphoribosyltransferase (335 aa).

Residues Gly82, 85-86 (GD), Thr90, 92-95 (NIST), 110-118 (KHGGRSVSS), and Ser122 contribute to the 5-phospho-alpha-D-ribose 1-diphosphate site. Gly82 serves as a coordination point for anthranilate. Ser94 contacts Mg(2+). Arg168 contributes to the anthranilate binding site. Positions 226 and 227 each coordinate Mg(2+).

It belongs to the anthranilate phosphoribosyltransferase family. In terms of assembly, homodimer. It depends on Mg(2+) as a cofactor.

It catalyses the reaction N-(5-phospho-beta-D-ribosyl)anthranilate + diphosphate = 5-phospho-alpha-D-ribose 1-diphosphate + anthranilate. It functions in the pathway amino-acid biosynthesis; L-tryptophan biosynthesis; L-tryptophan from chorismate: step 2/5. Catalyzes the transfer of the phosphoribosyl group of 5-phosphorylribose-1-pyrophosphate (PRPP) to anthranilate to yield N-(5'-phosphoribosyl)-anthranilate (PRA). This is Anthranilate phosphoribosyltransferase from Francisella philomiragia subsp. philomiragia (strain ATCC 25017 / CCUG 19701 / FSC 153 / O#319-036).